Reading from the N-terminus, the 530-residue chain is Hyalin (530 aa).

HYR domains lie at 1 to 66 (NVEI…TVTA), 67 to 150 (TDSI…NVVE), 151 to 234 (VDTT…NVVE), 235 to 319 (VDTT…NVVE), 320 to 403 (VDTT…NIVE), 404 to 486 (EDTT…TVNT), and 487 to 530 (VDTT…ASLV).

As to quaternary structure, homooligomer in presence of calcium. In terms of processing, glycosylated.

The protein resides in the secreted. The protein localises to the extracellular space. Its subcellular location is the extracellular matrix. Its function is as follows. Major constituent of the hyaline layer. The hyaline layer of echinoderm embryos is an extraembryonic matrix that functions as a substrate for cell adhesion through early development. This chain is Hyalin, found in Lytechinus variegatus (Green sea urchin).